Reading from the N-terminus, the 725-residue chain is Polyribonucleotide nucleotidyltransferase (725 aa).

Positions 487 and 493 each coordinate Mg(2+). One can recognise a KH domain in the interval 554–613 (PRIETMQIPTDKIREVIGTGGKVIREIVEKTGAKIDIQDTGVIKIASSDAKAIKAAYNWI). One can recognise an S1 motif domain in the interval 623–691 (GMIYDGTVVK…ERGKIRLSMK (69 aa)). The disordered stretch occupies residues 697–725 (TGEDITEKLKAEREADRNRERQARQSAGE). The segment covering 701-719 (ITEKLKAEREADRNRERQA) has biased composition (basic and acidic residues).

Belongs to the polyribonucleotide nucleotidyltransferase family. Requires Mg(2+) as cofactor.

It is found in the cytoplasm. It catalyses the reaction RNA(n+1) + phosphate = RNA(n) + a ribonucleoside 5'-diphosphate. Its function is as follows. Involved in mRNA degradation. Catalyzes the phosphorolysis of single-stranded polyribonucleotides processively in the 3'- to 5'-direction. The sequence is that of Polyribonucleotide nucleotidyltransferase from Methylobacterium nodulans (strain LMG 21967 / CNCM I-2342 / ORS 2060).